The sequence spans 266 residues: Putative transmembrane ascorbate-dependent reductase CYB561 homolog (266 aa).

Over 1-22 (MSLLFDPGFVILREDQSVKLFN) the chain is Cytoplasmic. A helical transmembrane segment spans residues 23 to 43 (IILVMSQVFGGLAVLLVTIWM). Positions 27 to 240 (MSQVFGGLAV…YTVCVLLLVL (214 aa)) constitute a Cytochrome b561 domain. Over 44 to 61 (SKFESGFAWNEDPDKEFN) the chain is Vesicular. The chain crosses the membrane as a helical span at residues 62–82 (YHPTFMIMGMVFLFGEALLVY). 3 residues coordinate heme b: H63, R83, and K90. Over 83–95 (RVFRNERKKFSKT) the chain is Cytoplasmic. The L-ascorbate site is built by K90 and K94. Residues 96–116 (LHVILHSCVLVFMLMALKAVF) traverse the membrane as a helical segment. Residues H97, 134 to 137 (NLVS), and H139 contribute to the heme b site. Topologically, residues 117–141 (DYHNLHKDPSGNPAPIVNLVSLHSW) are vesicular. A helical membrane pass occupies residues 142-162 (IGLSVVILYFAQYIVGFITYF). Residues 163-176 (FPGMPIPIRQLVMP) are Cytoplasmic-facing. An L-ascorbate-binding site is contributed by R171. Residues 177 to 197 (FHQMFGVLIFIFVSITVAMGI) form a helical membrane-spanning segment. Heme b contacts are provided by H178 and E199. Over 198 to 219 (SERAAWKHTCWTKEGQMCAQQA) the chain is Vesicular. Residues 220 to 240 (TSSFVGVFTFLYTVCVLLLVL) traverse the membrane as a helical segment. Topologically, residues 241-266 (NPRWKRQSLPEEEGLHHLTSSHSMSD) are cytoplasmic. K245 contributes to the heme b binding site.

Heme b serves as cofactor.

It localises to the membrane. It carries out the reaction monodehydro-L-ascorbate radical(out) + L-ascorbate(in) = monodehydro-L-ascorbate radical(in) + L-ascorbate(out). Putative transmembrane reductase that uses ascorbate as an electron donor in the cytoplasm and transfers electrons across membranes to reduce monodehydro-L-ascorbate radical in the lumen of secretory vesicles. The chain is Putative transmembrane ascorbate-dependent reductase CYB561 homolog from Caenorhabditis elegans.